The sequence spans 172 residues: MAINNENELEYKLIKKNKNPKISNSKKKNSTRPALQDKTNQTLPIHQNQAFSNILPSDFSIIKTPETKTADDFPVNGYEGLNILKFDLELFYKLKPVATSTPKSCMRTGSNLFLNETVKHVPDERLVSNIKNTQTKDSITRDSAYYHRKTMTESIIKTLAAFDAEVDEIILF.

Over residues 15 to 30 (KKNKNPKISNSKKKNS) the composition is skewed to basic residues. The tract at residues 15–43 (KKNKNPKISNSKKKNSTRPALQDKTNQTL) is disordered. Polar residues predominate over residues 31-43 (TRPALQDKTNQTL). A POLO box domain (PBD)-binding motif is present at residues 100–102 (STP).

In terms of assembly, interacts with rec8, Interacts with plo1.

It localises to the nucleus. The protein localises to the chromosome. It is found in the centromere. Its subcellular location is the kinetochore. Plays an important role in chromosome segregation during meiosis I by allowing meiotic rec8 to establish cohesion at the centromeric central core and thereby promote the side-by-side structure of kinetochores at meiosis I. Enables monopolar attachment during meiosis I. Required to facilitate kinetochore mono-orientation during meiosis I, when kinetochores on sister chromosomes face the same direction and are thus captured and pulled by spindle fibers from the same pole. Acts in collaboration with plo1. The chain is Monopolar attachment protein 1 (moa1) from Schizosaccharomyces pombe (strain 972 / ATCC 24843) (Fission yeast).